Reading from the N-terminus, the 533-residue chain is D-3-phosphoglycerate dehydrogenase (533 aa).

At Ala-2 the chain carries N-acetylalanine. Ser-14 is subject to Phosphoserine. Lys-58 carries the N6-acetyllysine modification. Residues Thr-78, 155–156 (RI), Asp-175, Thr-207, 234–236 (CAR), and Asp-260 each bind NAD(+). Thr-78 is subject to Phosphothreonine. Residue Arg-236 is part of the active site. Residue Glu-265 is part of the active site. His-283 functions as the Proton donor in the catalytic mechanism. Position 283–286 (283–286 (HLGA)) interacts with NAD(+).

Belongs to the D-isomer specific 2-hydroxyacid dehydrogenase family. In terms of assembly, homotetramer.

The catalysed reaction is (2R)-3-phosphoglycerate + NAD(+) = 3-phosphooxypyruvate + NADH + H(+). It carries out the reaction (R)-2-hydroxyglutarate + NAD(+) = 2-oxoglutarate + NADH + H(+). The enzyme catalyses (S)-malate + NAD(+) = oxaloacetate + NADH + H(+). It participates in amino-acid biosynthesis; L-serine biosynthesis; L-serine from 3-phospho-D-glycerate: step 1/3. In terms of biological role, catalyzes the reversible oxidation of 3-phospho-D-glycerate to 3-phosphonooxypyruvate, the first step of the phosphorylated L-serine biosynthesis pathway. Also catalyzes the reversible oxidation of 2-hydroxyglutarate to 2-oxoglutarate and the reversible oxidation of (S)-malate to oxaloacetate. The protein is D-3-phosphoglycerate dehydrogenase (PHGDH) of Sus scrofa (Pig).